We begin with the raw amino-acid sequence, 135 residues long: Rheacalcin-1 (135 aa).

Cystine bridges form between C6-C17, C34-C131, and C106-C123. A C-type lectin domain is found at 13–132 (FRGNCYGYFR…CSERNAFICK (120 aa)).

The protein localises to the secreted. Its subcellular location is the extracellular space. It is found in the extracellular matrix. The chain is Rheacalcin-1 from Rhea americana (Greater rhea).